The primary structure comprises 177 residues: Large ribosomal subunit protein uL16m (177 aa).

This sequence belongs to the universal ribosomal protein uL16 family.

The protein resides in the mitochondrion. This Brassica napus (Rape) protein is Large ribosomal subunit protein uL16m (RPL16).